The following is a 79-amino-acid chain: Metallothionein-like protein type 2 (79 aa).

This sequence belongs to the metallothionein superfamily. Type 15 family.

Its function is as follows. Metallothioneins have a high content of cysteine residues that bind various heavy metals. This is Metallothionein-like protein type 2 (MT1) from Malus domestica (Apple).